Reading from the N-terminus, the 208-residue chain is Uridine kinase (208 aa).

ATP is bound at residue 12–19; that stretch reads GGSGGGKT.

Belongs to the uridine kinase family.

The protein localises to the cytoplasm. It carries out the reaction uridine + ATP = UMP + ADP + H(+). The enzyme catalyses cytidine + ATP = CMP + ADP + H(+). It functions in the pathway pyrimidine metabolism; CTP biosynthesis via salvage pathway; CTP from cytidine: step 1/3. The protein operates within pyrimidine metabolism; UMP biosynthesis via salvage pathway; UMP from uridine: step 1/1. The protein is Uridine kinase of Streptococcus pyogenes serotype M18 (strain MGAS8232).